A 211-amino-acid polypeptide reads, in one-letter code: Probable GTP-binding protein EngB (211 aa).

The EngB-type G domain maps to 30–204; it reads EGFEVAFAGR…YTVLAGWMEL (175 aa). GTP is bound by residues 38 to 45, 64 to 68, 82 to 85, 149 to 152, and 182 to 185; these read GRSNAGKS, GRTQL, DLPG, TKAD, and LFSA. Residues Ser-45 and Thr-66 each contribute to the Mg(2+) site.

The protein belongs to the TRAFAC class TrmE-Era-EngA-EngB-Septin-like GTPase superfamily. EngB GTPase family. The cofactor is Mg(2+).

Necessary for normal cell division and for the maintenance of normal septation. In Pseudomonas syringae pv. tomato (strain ATCC BAA-871 / DC3000), this protein is Probable GTP-binding protein EngB.